Here is a 169-residue protein sequence, read N- to C-terminus: Phosphopantetheine adenylyltransferase (169 aa).

Thr14 lines the substrate pocket. Residues 14 to 15 and His22 contribute to the ATP site; that span reads TF. Residues Lys46, Leu78, and Arg92 each coordinate substrate. ATP contacts are provided by residues 93–95, Glu103, and 128–134; these read GLR and HSFISSS.

Belongs to the bacterial CoaD family. Homohexamer. Requires Mg(2+) as cofactor.

It is found in the cytoplasm. It carries out the reaction (R)-4'-phosphopantetheine + ATP + H(+) = 3'-dephospho-CoA + diphosphate. It participates in cofactor biosynthesis; coenzyme A biosynthesis; CoA from (R)-pantothenate: step 4/5. Its function is as follows. Reversibly transfers an adenylyl group from ATP to 4'-phosphopantetheine, yielding dephospho-CoA (dPCoA) and pyrophosphate. The protein is Phosphopantetheine adenylyltransferase of Stenotrophomonas maltophilia (strain R551-3).